Here is a 150-residue protein sequence, read N- to C-terminus: 1,4-dihydroxy-2-naphthoyl-CoA hydrolase (150 aa).

Residue Asp-22 is part of the active site.

It belongs to the 4-hydroxybenzoyl-CoA thioesterase family. DHNA-CoA hydrolase subfamily.

It catalyses the reaction 1,4-dihydroxy-2-naphthoyl-CoA + H2O = 1,4-dihydroxy-2-naphthoate + CoA + H(+). It participates in cofactor biosynthesis; phylloquinone biosynthesis. Its pathway is quinol/quinone metabolism; 1,4-dihydroxy-2-naphthoate biosynthesis; 1,4-dihydroxy-2-naphthoate from chorismate: step 7/7. Catalyzes the hydrolysis of 1,4-dihydroxy-2-naphthoyl-CoA (DHNA-CoA) to 1,4-dihydroxy-2-naphthoate (DHNA), a reaction involved in phylloquinone (vitamin K1) biosynthesis. The polypeptide is 1,4-dihydroxy-2-naphthoyl-CoA hydrolase (Prochlorococcus marinus (strain NATL1A)).